Consider the following 264-residue polypeptide: Pyridoxine 5'-phosphate synthase (264 aa).

Residue N28 coordinates 3-amino-2-oxopropyl phosphate. 30 to 31 (DH) contacts 1-deoxy-D-xylulose 5-phosphate. R39 contacts 3-amino-2-oxopropyl phosphate. H64 serves as the catalytic Proton acceptor. 2 residues coordinate 1-deoxy-D-xylulose 5-phosphate: R66 and H71. E91 functions as the Proton acceptor in the catalytic mechanism. T121 contacts 1-deoxy-D-xylulose 5-phosphate. The active-site Proton donor is the H217. 3-amino-2-oxopropyl phosphate contacts are provided by residues G218 and 239–240 (GH).

The protein belongs to the PNP synthase family. In terms of assembly, homooctamer; tetramer of dimers.

It localises to the cytoplasm. The catalysed reaction is 3-amino-2-oxopropyl phosphate + 1-deoxy-D-xylulose 5-phosphate = pyridoxine 5'-phosphate + phosphate + 2 H2O + H(+). It functions in the pathway cofactor biosynthesis; pyridoxine 5'-phosphate biosynthesis; pyridoxine 5'-phosphate from D-erythrose 4-phosphate: step 5/5. Its function is as follows. Catalyzes the complicated ring closure reaction between the two acyclic compounds 1-deoxy-D-xylulose-5-phosphate (DXP) and 3-amino-2-oxopropyl phosphate (1-amino-acetone-3-phosphate or AAP) to form pyridoxine 5'-phosphate (PNP) and inorganic phosphate. The chain is Pyridoxine 5'-phosphate synthase from Psychrobacter arcticus (strain DSM 17307 / VKM B-2377 / 273-4).